The following is a 281-amino-acid chain: Ribosomal RNA small subunit methyltransferase J (281 aa).

S-adenosyl-L-methionine is bound by residues 129 to 130 (RD), 145 to 146 (ER), and Asp199.

The protein belongs to the methyltransferase superfamily. RsmJ family.

It localises to the cytoplasm. It carries out the reaction guanosine(1516) in 16S rRNA + S-adenosyl-L-methionine = N(2)-methylguanosine(1516) in 16S rRNA + S-adenosyl-L-homocysteine + H(+). In terms of biological role, specifically methylates the guanosine in position 1516 of 16S rRNA. The polypeptide is Ribosomal RNA small subunit methyltransferase J (Laribacter hongkongensis (strain HLHK9)).